We begin with the raw amino-acid sequence, 85 residues long: Large ribosomal subunit protein bL27 (85 aa).

It belongs to the bacterial ribosomal protein bL27 family.

In Campylobacter curvus (strain 525.92), this protein is Large ribosomal subunit protein bL27.